A 302-amino-acid chain; its full sequence is Thioredoxin-like protein CDSP32, chloroplastic (302 aa).

The transit peptide at 1–56 (MATVANFLAKPISTVVPRPSSAVASTSSFVFFNHKTNPLFRRKNLPKRLFSAVKIK) directs the protein to the chloroplast. Residues 163-298 (HEEEGIEPDQ…IGEILRYSGV (136 aa)) enclose the Thioredoxin domain. Catalysis depends on nucleophile residues C219 and C222. A disulfide bond links C219 and C222.

It belongs to the thioredoxin family. In terms of assembly, interacts with the plastidial peroxiredoxin BAS1.

It localises to the plastid. The protein resides in the chloroplast stroma. Its function is as follows. Probable thiol-disulfide oxidoreductase involved in resistance to oxidative stress. May participate in the reduction of alkyl hydroperoxides derived from oxidative stress by acting as a physiological electron donor to the BAS1 peroxiredoxin. May regenerate methionine sulfoxide reductase B1 (MSRB1) activity through sulfenic acid reduction. The polypeptide is Thioredoxin-like protein CDSP32, chloroplastic (CDSP32) (Arabidopsis thaliana (Mouse-ear cress)).